A 219-amino-acid chain; its full sequence is Ribose-5-phosphate isomerase A (219 aa).

Residues 28–31, 81–84, and 94–97 contribute to the substrate site; these read SGST, DGAD, and KGGG. Glutamate 103 serves as the catalytic Proton acceptor. Substrate is bound at residue lysine 121.

The protein belongs to the ribose 5-phosphate isomerase family. In terms of assembly, homodimer.

It carries out the reaction aldehydo-D-ribose 5-phosphate = D-ribulose 5-phosphate. It functions in the pathway carbohydrate degradation; pentose phosphate pathway; D-ribose 5-phosphate from D-ribulose 5-phosphate (non-oxidative stage): step 1/1. In terms of biological role, catalyzes the reversible conversion of ribose-5-phosphate to ribulose 5-phosphate. The chain is Ribose-5-phosphate isomerase A from Haemophilus influenzae (strain 86-028NP).